Reading from the N-terminus, the 538-residue chain is Reticuline oxidase (538 aa).

The signal sequence occupies residues 1-23 (MENKTPIFFSLSIFLSLLNCALG). A disulfide bond links Cys30 and Cys89. The N-linked (GlcNAc...) asparagine glycan is linked to Asn38. Residues 67-241 (LISKPSAIIL…YAWKIKLLPV (175 aa)) form the FAD-binding PCMH-type domain. The segment at residues 104-166 (HSYEGLSYTS…SKLGFTAGWC (63 aa)) is a cross-link (6-(S-cysteinyl)-8alpha-(pros-histidyl)-FAD (His-Cys)). 2 N-linked (GlcNAc...) asparagine glycosylation sites follow: Asn423 and Asn471.

The protein belongs to the oxygen-dependent FAD-linked oxidoreductase family. It depends on FAD as a cofactor. Requires a metal cation as cofactor. Post-translationally, the FAD cofactor is bound via a bicovalent 6-S-cysteinyl, 8alpha-N1-histidyl FAD linkage.

The protein resides in the cytoplasmic vesicle. It carries out the reaction (S)-reticuline + O2 = (S)-scoulerine + H2O2 + H(+). It participates in alkaloid biosynthesis; (S)-scoulerine biosynthesis; (S)-scoulerine from (S)-reticuline: step 1/1. In terms of biological role, essential to the formation of benzophenanthridine alkaloids in the response of plants to pathogenic attack. Catalyzes the stereospecific conversion of the N-methyl moiety of (S)-reticuline into the berberine bridge carbon of (S)-scoulerine. The protein is Reticuline oxidase (BBE1) of Eschscholzia californica (California poppy).